The sequence spans 334 residues: Cytoplasmic envelopment protein 2 (334 aa).

It belongs to the herpesviridae cytoplasmic envelopment protein 2 family. In terms of assembly, interacts with cytoplasmic envelopment protein 3 and with the capsid.

It localises to the virion tegument. It is found in the host cytoplasm. The protein localises to the host nucleus. Its function is as follows. Plays a critical role in cytoplasmic virus egress. Participates in the final step of tegumentation and envelope acquisition within the host cytoplasm by directly interacting with the capsid. Upon virion binding to target cell, a signaling cascade is triggered to disrupt the interaction with the capsid, thereby preparing capsid uncoating. The chain is Cytoplasmic envelopment protein 2 (ORF33) from Homo sapiens (Human).